A 288-amino-acid polypeptide reads, in one-letter code: Ninja-family protein 6 (288 aa).

2 disordered regions span residues 1 to 50 and 66 to 207; these read MASR…KRPR and LHAD…TRTG. Residues 12–23 show a composition bias toward gly residues; sequence AGEGAGPPGDAG. A compositionally biased stretch (low complexity) spans 76–86; the sequence is LPLLRTTSLPT. Basic and acidic residues predominate over residues 91 to 103; the sequence is ERWRRREMQSRRR. Polar residues predominate over residues 131–173; that stretch reads RRSNASQGSNSASTTEQGIGGSMFNQSADAKSPSTSDNRNQND. Positions 195-207 are enriched in low complexity; sequence RLRTLGSLTTRTG.

It belongs to the Ninja family.

It localises to the nucleus. The protein is Ninja-family protein 6 of Zea mays (Maize).